Consider the following 306-residue polypeptide: Ribonuclease BN (306 aa).

The Zn(2+) site is built by His-64, His-66, Asp-68, His-69, His-141, Asp-212, and His-270. Asp-68 functions as the Proton acceptor in the catalytic mechanism.

This sequence belongs to the RNase Z family. RNase BN subfamily. In terms of assembly, homodimer. Zn(2+) is required as a cofactor.

Its function is as follows. Zinc phosphodiesterase, which has both exoribonuclease and endoribonuclease activities. This chain is Ribonuclease BN, found in Klebsiella pneumoniae (strain 342).